The primary structure comprises 246 residues: Exosome complex component Rrp41 (246 aa).

It belongs to the RNase PH family. Rrp41 subfamily. As to quaternary structure, component of the archaeal exosome complex. Forms a hexameric ring-like arrangement composed of 3 Rrp41-Rrp42 heterodimers. The hexameric ring associates with a trimer of Rrp4 and/or Csl4 subunits.

It is found in the cytoplasm. Catalytic component of the exosome, which is a complex involved in RNA degradation. Has 3'-&gt;5' exoribonuclease activity. Can also synthesize heteromeric RNA-tails. This is Exosome complex component Rrp41 from Pyrobaculum calidifontis (strain DSM 21063 / JCM 11548 / VA1).